The chain runs to 158 residues: Placenta growth factor (158 aa).

Positions methionine 1–alanine 18 are cleaved as a signal peptide. N-linked (GlcNAc...) asparagine glycans are attached at residues asparagine 29 and asparagine 30. Cystine bridges form between cysteine 48-cysteine 90, cysteine 79-cysteine 125, and cysteine 83-cysteine 127. The N-linked (GlcNAc...) asparagine glycan is linked to asparagine 97. The disordered stretch occupies residues alanine 136–proline 158. The span at glutamate 137–arginine 149 shows a compositional bias: basic residues.

The protein belongs to the PDGF/VEGF growth factor family. As to quaternary structure, antiparallel homodimer; disulfide-linked. Also found as heterodimer with VEGFA/VEGF.

Its subcellular location is the secreted. Growth factor active in angiogenesis and endothelial cell growth, stimulating their proliferation and migration. It binds to the receptor FLT1/VEGFR-1. Also promotes cell tumor growth. This chain is Placenta growth factor (Pgf), found in Mus musculus (Mouse).